Reading from the N-terminus, the 143-residue chain is Cytochrome c-type biogenesis protein CcmE (143 aa).

Residues 1 to 8 (MTPVRRRK) lie on the Cytoplasmic side of the membrane. A helical; Signal-anchor for type II membrane protein membrane pass occupies residues 9-29 (LFILLFALSVLSAAAALVLYA). Residues 30-143 (LRQNISLFYT…KSALADKVKQ (114 aa)) are Periplasmic-facing. The heme site is built by His124 and Tyr128.

Belongs to the CcmE/CycJ family.

The protein resides in the cell inner membrane. Heme chaperone required for the biogenesis of c-type cytochromes. Transiently binds heme delivered by CcmC and transfers the heme to apo-cytochromes in a process facilitated by CcmF and CcmH. In Legionella pneumophila, this protein is Cytochrome c-type biogenesis protein CcmE.